A 564-amino-acid chain; its full sequence is Nucleolus and neural progenitor protein (564 aa).

The disordered stretch occupies residues 431–495; that stretch reads GSRTSTSEHP…KRRCSGTVQR (65 aa). Residues 442 to 459 are compositionally biased toward basic residues; it reads RQRRSKYKVLSRQRKPQR. Positions 442-460 are nuclear localization signal; the sequence is RQRRSKYKVLSRQRKPQRK. Polar residues predominate over residues 460-473; it reads KLQSTLLKETQQVP.

It belongs to the nepro family.

The protein localises to the nucleus. It is found in the nucleolus. Functionally, may play a role in cortex development as part of the Notch signaling pathway. Downstream of Notch may repress the expression of proneural genes and inhibit neuronal differentiation thereby maintaining neural progenitors. May also play a role in preimplentation embryo development. This Mus musculus (Mouse) protein is Nucleolus and neural progenitor protein.